The following is a 105-amino-acid chain: Large ribosomal subunit protein uL24 (105 aa).

It belongs to the universal ribosomal protein uL24 family. As to quaternary structure, part of the 50S ribosomal subunit.

In terms of biological role, one of two assembly initiator proteins, it binds directly to the 5'-end of the 23S rRNA, where it nucleates assembly of the 50S subunit. Functionally, one of the proteins that surrounds the polypeptide exit tunnel on the outside of the subunit. The chain is Large ribosomal subunit protein uL24 from Francisella tularensis subsp. novicida (strain U112).